The chain runs to 956 residues: Thrombospondin-3 (956 aa).

The first 22 residues, 1 to 22, serve as a signal peptide directing secretion; sequence METQELRGALALLLLCFFTSAS. Residues 23 to 193 form the Laminin G-like domain; it reads QDLQVIDLLT…VESMKIILGG (171 aa). Cystine bridges form between C278–C289, C283–C300, C303–C314, C320–C332, C326–C341, C344–C368, C374–C388, C382–C397, C400–C412, C418–C432, C426–C442, C444–C455, C471–C478, C483–C503, C519–C539, C542–C562, C578–C598, C601–C621, C639–C659, C679–C699, and C715–C936. An N-linked (GlcNAc...) asparagine glycan is attached at N310. One can recognise an EGF-like 1; calcium-binding domain in the interval 316–354; that stretch reads DINECAHADPCFPGSSCINTMPGFHCEACPRGYKGTQVS. Positions 370 to 410 constitute an EGF-like 2; calcium-binding domain; that stretch reads DIDECNDGNNGGCDPNSICTNTVGSFKCGPCRLGFLGNQSQ. N407 is a glycosylation site (N-linked (GlcNAc...) asparagine). The EGF-like 3 domain maps to 414–456; it reads PARTCHSPAHSPCHIHAHCLFERNGAVSCQCNVGWAGNGNVCG. 8 TSP type-3 repeats span residues 457-491, 492-527, 528-550, 551-586, 587-609, 610-647, 648-687, and 688-723; these read TDTD…NSGQ, EDAD…NKDQ, QNSD…NNDQ, KDTD…NPLQ, TDRD…NPTQ, TDAD…NSSQ, LDSD…NPNQ, and KDSD…EVTL. Disordered stretches follow at residues 518–537 and 546–702; these read NCRL…SFGD and PNND…CEDD. Residues 555–568 show a composition bias toward acidic residues; that stretch reads GNGEGDACDNDVDG. Over residues 612 to 628 the composition is skewed to acidic residues; the sequence is ADSDLVGDVCDTNEDSD. Residue N644 is glycosylated (N-linked (GlcNAc...) asparagine). Positions 650 to 667 are enriched in acidic residues; sequence SDNDGLGDECDGDDDNDG. One can recognise a TSP C-terminal domain in the interval 727–941; that stretch reads RAYQTVVLDP…LQYRCNDTVP (215 aa). N-linked (GlcNAc...) asparagine glycosylation is present at N937.

Belongs to the thrombospondin family. As to quaternary structure, oligomer; disulfide-linked.

Adhesive glycoprotein that mediates cell-to-cell and cell-to-matrix interactions. Can bind to fibrinogen, fibronectin, laminin and type V collagen. The chain is Thrombospondin-3 (THBS3) from Homo sapiens (Human).